The following is a 785-amino-acid chain: Endonuclease MutS2 (785 aa).

332-339 contacts ATP; sequence GPNTGGKT. The Smr domain maps to 710-785; that stretch reads IDLRGLDAEE…GDGATIVELK (76 aa).

This sequence belongs to the DNA mismatch repair MutS family. MutS2 subfamily. In terms of assembly, homodimer. Binds to stalled ribosomes, contacting rRNA.

Endonuclease that is involved in the suppression of homologous recombination and thus may have a key role in the control of bacterial genetic diversity. Functionally, acts as a ribosome collision sensor, splitting the ribosome into its 2 subunits. Detects stalled/collided 70S ribosomes which it binds and splits by an ATP-hydrolysis driven conformational change. Acts upstream of the ribosome quality control system (RQC), a ribosome-associated complex that mediates the extraction of incompletely synthesized nascent chains from stalled ribosomes and their subsequent degradation. Probably generates substrates for RQC. The sequence is that of Endonuclease MutS2 from Clostridium botulinum (strain Alaska E43 / Type E3).